The primary structure comprises 117 residues: Minor capsid protein VP2 (117 aa).

The protein belongs to the lagovirus VP2 protein family. In terms of assembly, homooligomer. The portal-like structure consists in 12 copies of VP2. Interacts with capsid protein VP1.

It localises to the virion. It is found in the host cytoplasm. In terms of biological role, minor structural protein that forms a portal-like structure at a unique three-fold axis of symmetry, following binding to the host receptor. The channel formed by VP2 may allow the delivery of the viral genome through the host endosomal membrane. In Rabbit hemorrhagic disease virus (strain AST89) (Ra/LV/RHDV/AST89/1989/SP), this protein is Minor capsid protein VP2.